Here is an 88-residue protein sequence, read N- to C-terminus: Apolipoprotein C-I (88 aa).

Residues M1–A26 form the signal peptide.

This sequence belongs to the apolipoprotein C1 family.

It is found in the secreted. Inhibitor of lipoprotein binding to the low density lipoprotein (LDL) receptor, LDL receptor-related protein, and very low density lipoprotein (VLDL) receptor. Associates with high density lipoproteins (HDL) and the triacylglycerol-rich lipoproteins in the plasma and makes up about 10% of the protein of the VLDL and 2% of that of HDL. Appears to interfere directly with fatty acid uptake and is also the major plasma inhibitor of cholesteryl ester transfer protein (CETP). Binds free fatty acids and reduces their intracellular esterification. Modulates the interaction of APOE with beta-migrating VLDL and inhibits binding of beta-VLDL to the LDL receptor-related protein. This chain is Apolipoprotein C-I (APOC1), found in Leptonychotes weddellii (Weddell seal).